A 124-amino-acid chain; its full sequence is Glycine cleavage system H protein (124 aa).

The Lipoyl-binding domain occupies 22–104 (TATVGITDFA…YGDGWMIEIE (83 aa)). At lysine 63 the chain carries N6-lipoyllysine.

The protein belongs to the GcvH family. In terms of assembly, the glycine cleavage system is composed of four proteins: P, T, L and H. (R)-lipoate is required as a cofactor.

In terms of biological role, the glycine cleavage system catalyzes the degradation of glycine. The H protein shuttles the methylamine group of glycine from the P protein to the T protein. This Salinibacter ruber (strain DSM 13855 / M31) protein is Glycine cleavage system H protein.